Consider the following 109-residue polypeptide: Thioredoxin 1 (109 aa).

In terms of domain architecture, Thioredoxin spans 2-109 (SDKIIHLTDD…LKEFLDANLA (108 aa)). Residues Cys-33 and Cys-36 each act as nucleophile in the active site. Cys-33 and Cys-36 are disulfide-bonded. The residue at position 70 (Lys-70) is an N6-acetyllysine.

Belongs to the thioredoxin family. Monomer.

Functionally, participates in various redox reactions through the reversible oxidation of its active center dithiol to a disulfide and catalyzes dithiol-disulfide exchange reactions. This Escherichia coli O157:H7 protein is Thioredoxin 1 (trxA).